Here is a 434-residue protein sequence, read N- to C-terminus: Serine--tRNA ligase (434 aa).

L-serine is bound at residue 239–241 (TAE). 270 to 272 (RSE) provides a ligand contact to ATP. Glutamate 293 provides a ligand contact to L-serine. ATP is bound at residue 357–360 (EISS). Serine 392 is an L-serine binding site.

The protein belongs to the class-II aminoacyl-tRNA synthetase family. Type-1 seryl-tRNA synthetase subfamily. As to quaternary structure, homodimer. The tRNA molecule binds across the dimer.

The protein resides in the cytoplasm. The enzyme catalyses tRNA(Ser) + L-serine + ATP = L-seryl-tRNA(Ser) + AMP + diphosphate + H(+). It carries out the reaction tRNA(Sec) + L-serine + ATP = L-seryl-tRNA(Sec) + AMP + diphosphate + H(+). The protein operates within aminoacyl-tRNA biosynthesis; selenocysteinyl-tRNA(Sec) biosynthesis; L-seryl-tRNA(Sec) from L-serine and tRNA(Sec): step 1/1. In terms of biological role, catalyzes the attachment of serine to tRNA(Ser). Is also able to aminoacylate tRNA(Sec) with serine, to form the misacylated tRNA L-seryl-tRNA(Sec), which will be further converted into selenocysteinyl-tRNA(Sec). This chain is Serine--tRNA ligase, found in Cupriavidus necator (strain ATCC 17699 / DSM 428 / KCTC 22496 / NCIMB 10442 / H16 / Stanier 337) (Ralstonia eutropha).